Reading from the N-terminus, the 104-residue chain is Probable RNA-binding protein PA4753 (104 aa).

One can recognise a CRM domain in the interval 1 to 97 (MALTQEQKKQ…NPKPNKNLSN (97 aa)).

This Pseudomonas aeruginosa (strain ATCC 15692 / DSM 22644 / CIP 104116 / JCM 14847 / LMG 12228 / 1C / PRS 101 / PAO1) protein is Probable RNA-binding protein PA4753.